Here is a 418-residue protein sequence, read N- to C-terminus: DnaJ protein homolog 2 (418 aa).

Residues 11–76 (NTKYYEVLGV…REIYDQYGEE (66 aa)) enclose the J domain. The CR-type zinc finger occupies 135–219 (GTSKKLSLSR…CKGEKVVQQK (85 aa)). CXXCXGXG motif repeat units follow at residues 148 to 155 (CTKCKGKG), 164 to 171 (CASCQGSG), 191 to 198 (CNECKGTG), and 207 to 214 (CPQCKGEK). The tract at residues 382-418 (VNIEEEMRRKQHQQAQEAYDEDDEGHGGAQRVQCAQQ) is disordered. Cysteine 415 carries the cysteine methyl ester modification. A lipid anchor (S-farnesyl cysteine) is attached at cysteine 415. The propeptide at 416-418 (AQQ) is removed in mature form.

It is found in the membrane. Its function is as follows. Plays a continuous role in plant development probably in the structural organization of compartments. The sequence is that of DnaJ protein homolog 2 (LDJ2) from Allium porrum (Leek).